A 327-amino-acid chain; its full sequence is Ribosomal RNA small subunit methyltransferase H (327 aa).

Residues 36-38 (GGH), aspartate 55, leucine 89, aspartate 103, and glutamine 110 contribute to the S-adenosyl-L-methionine site. Residues 286-327 (GAEPASDTEIEQNARAGSVRLRAAERTAAEPGRAHNPTGGVR) form a disordered region.

It belongs to the methyltransferase superfamily. RsmH family.

Its subcellular location is the cytoplasm. It catalyses the reaction cytidine(1402) in 16S rRNA + S-adenosyl-L-methionine = N(4)-methylcytidine(1402) in 16S rRNA + S-adenosyl-L-homocysteine + H(+). Functionally, specifically methylates the N4 position of cytidine in position 1402 (C1402) of 16S rRNA. This is Ribosomal RNA small subunit methyltransferase H from Parafrankia sp. (strain EAN1pec).